The primary structure comprises 860 residues: Leucine--tRNA ligase (860 aa).

Residues 42–52 carry the 'HIGH' region motif; that stretch reads PYPSGRLHMGH. The short motif at 619 to 623 is the 'KMSKS' region element; that stretch reads KMSKS. Lysine 622 contacts ATP.

This sequence belongs to the class-I aminoacyl-tRNA synthetase family.

The protein resides in the cytoplasm. It carries out the reaction tRNA(Leu) + L-leucine + ATP = L-leucyl-tRNA(Leu) + AMP + diphosphate. The sequence is that of Leucine--tRNA ligase from Erwinia tasmaniensis (strain DSM 17950 / CFBP 7177 / CIP 109463 / NCPPB 4357 / Et1/99).